A 230-amino-acid chain; its full sequence is uncharacterized protein (230 aa).

One can recognise an HTH gntR-type domain in the interval 12–80; sequence KNLSYVLAEK…PRIGTRVMPQ (69 aa). Residues 40 to 59 constitute a DNA-binding region (H-T-H motif); it reads EIELGEQFGVSRTAVREAVK.

This is an uncharacterized protein from Escherichia coli (strain K12).